The sequence spans 284 residues: D-tagatose-1,6-bisphosphate aldolase subunit GatY (284 aa).

The active-site Proton donor is D82. Zn(2+) is bound by residues H83 and H180. Residue G181 participates in dihydroxyacetone phosphate binding. Residue H208 participates in Zn(2+) binding. Residues 209–211 and 230–233 each bind dihydroxyacetone phosphate; these read GAS and NVAT.

The protein belongs to the class II fructose-bisphosphate aldolase family. TagBP aldolase GatY subfamily. As to quaternary structure, forms a complex with GatZ. Zn(2+) serves as cofactor.

The enzyme catalyses D-tagatofuranose 1,6-bisphosphate = D-glyceraldehyde 3-phosphate + dihydroxyacetone phosphate. It participates in carbohydrate metabolism; D-tagatose 6-phosphate degradation; D-glyceraldehyde 3-phosphate and glycerone phosphate from D-tagatose 6-phosphate: step 2/2. In terms of biological role, catalytic subunit of the tagatose-1,6-bisphosphate aldolase GatYZ, which catalyzes the reversible aldol condensation of dihydroxyacetone phosphate (DHAP or glycerone-phosphate) with glyceraldehyde 3-phosphate (G3P) to produce tagatose 1,6-bisphosphate (TBP). Requires GatZ subunit for full activity and stability. Is involved in the catabolism of galactitol. In Escherichia coli O8 (strain IAI1), this protein is D-tagatose-1,6-bisphosphate aldolase subunit GatY.